A 452-amino-acid polypeptide reads, in one-letter code: Isocitrate dehydrogenase [NADP], mitochondrial (452 aa).

A mitochondrion-targeting transit peptide spans 1-39 (MAGYLRAVSSLCRASGSARTWAPAALTVPSWPEQPRRHY). Residues lysine 45, lysine 48, lysine 67, and lysine 69 each carry the N6-acetyllysine modification. N6-acetyllysine; alternate occurs at positions 80 and 106. Lysine 80 and lysine 106 each carry N6-succinyllysine; alternate. NADP(+)-binding positions include 115–117 (TIT) and arginine 122. Position 117 (threonine 117) interacts with D-threo-isocitrate. D-threo-isocitrate is bound by residues 134 to 140 (SPNGTIR) and arginine 149. Lysine 155 is modified (N6-acetyllysine). N6-acetyllysine; alternate is present on lysine 166. Lysine 166 is modified (N6-succinyllysine; alternate). Arginine 172 is a binding site for D-threo-isocitrate. An N6-acetyllysine; alternate mark is found at lysine 180 and lysine 193. N6-succinyllysine; alternate is present on residues lysine 180 and lysine 193. Lysine 199 carries the post-translational modification N6-acetyllysine. The residue at position 256 (lysine 256) is an N6-acetyllysine; alternate. Lysine 256 is modified (N6-succinyllysine; alternate). An N6-acetyllysine mark is found at lysine 263, lysine 272, lysine 275, and lysine 280. An N6-acetyllysine; alternate modification is found at lysine 282. Lysine 282 carries the post-translational modification N6-succinyllysine; alternate. Position 291 (aspartate 291) interacts with Mn(2+). Lysine 299 provides a ligand contact to NADP(+). Aspartate 314 lines the Mn(2+) pocket. NADP(+) contacts are provided by residues 349-354 (GTVTRH) and asparagine 367. Lysine 384 is subject to N6-acetyllysine; alternate. An N6-succinyllysine; alternate modification is found at lysine 384. N6-acetyllysine occurs at positions 400, 413, and 442.

This sequence belongs to the isocitrate and isopropylmalate dehydrogenases family. Homodimer. The cofactor is Mg(2+). Requires Mn(2+) as cofactor. In terms of processing, acetylation at Lys-413 dramatically reduces catalytic activity. Deacetylated by SIRT3. As to expression, predominantly expressed in heart, liver and kidney. Expressed in activated B lymphocytes.

Its subcellular location is the mitochondrion. It carries out the reaction D-threo-isocitrate + NADP(+) = 2-oxoglutarate + CO2 + NADPH. Plays a role in intermediary metabolism and energy production. It may tightly associate or interact with the pyruvate dehydrogenase complex. This chain is Isocitrate dehydrogenase [NADP], mitochondrial (Idh2), found in Mus musculus (Mouse).